The following is a 414-amino-acid chain: Protein PHLOEM PROTEIN 2-LIKE A10 (414 aa).

2 helical membrane-spanning segments follow: residues 20-40 and 379-399; these read WLIF…VYHL and YVGA…LHII.

It localises to the membrane. The protein is Protein PHLOEM PROTEIN 2-LIKE A10 (PP2A10) of Arabidopsis thaliana (Mouse-ear cress).